A 225-amino-acid chain; its full sequence is Octanoyltransferase (225 aa).

The 183-residue stretch at 43-225 (GTAPELVWLL…KTFRDVFGRG (183 aa)) folds into the BPL/LPL catalytic domain. Substrate contacts are provided by residues 82-89 (RGGQYTYH), 157-159 (AIG), and 170-172 (GVS). The active-site Acyl-thioester intermediate is the C188.

It belongs to the LipB family.

The protein resides in the cytoplasm. The catalysed reaction is octanoyl-[ACP] + L-lysyl-[protein] = N(6)-octanoyl-L-lysyl-[protein] + holo-[ACP] + H(+). The protein operates within protein modification; protein lipoylation via endogenous pathway; protein N(6)-(lipoyl)lysine from octanoyl-[acyl-carrier-protein]: step 1/2. Catalyzes the transfer of endogenously produced octanoic acid from octanoyl-acyl-carrier-protein onto the lipoyl domains of lipoate-dependent enzymes. Lipoyl-ACP can also act as a substrate although octanoyl-ACP is likely to be the physiological substrate. In Parvibaculum lavamentivorans (strain DS-1 / DSM 13023 / NCIMB 13966), this protein is Octanoyltransferase.